The primary structure comprises 241 residues: Probable transcriptional regulatory protein Neut_0281 (241 aa).

Belongs to the TACO1 family.

The protein localises to the cytoplasm. The protein is Probable transcriptional regulatory protein Neut_0281 of Nitrosomonas eutropha (strain DSM 101675 / C91 / Nm57).